A 1059-amino-acid polypeptide reads, in one-letter code: Carbamoyl phosphate synthase large chain (1059 aa).

The carboxyphosphate synthetic domain stretch occupies residues 1–401; that stretch reads MPKRTDIKKI…SLLKACRSLE (401 aa). Residues Arg-129, Arg-169, Gly-175, Gly-176, Arg-208, Ile-210, Glu-215, Gly-241, Ile-242, His-243, Gln-284, and Glu-298 each coordinate ATP. Positions 133 to 327 constitute an ATP-grasp 1 domain; sequence KQLMEDLEQP…IAKLAAKIAV (195 aa). Mg(2+) is bound by residues Gln-284, Glu-298, and Asn-300. 3 residues coordinate Mn(2+): Gln-284, Glu-298, and Asn-300. The tract at residues 402–546 is oligomerization domain; it reads IGVYHNEMPE…YSTYEWENES (145 aa). Positions 547 to 929 are carbamoyl phosphate synthetic domain; it reads IKSEKESVIV…ALYKAFEASY (383 aa). The ATP-grasp 2 domain occupies 671–861; that stretch reads EQALKDLNIP…MAQIATKLIL (191 aa). Residues Arg-707, Ser-746, Leu-748, Glu-752, Gly-777, Val-778, His-779, Ser-780, Gln-820, and Glu-832 each contribute to the ATP site. The Mg(2+) site is built by Gln-820, Glu-832, and Asn-834. Mn(2+)-binding residues include Gln-820, Glu-832, and Asn-834. An MGS-like domain is found at 930–1059; the sequence is FHLPAFGNVI…ESRGFITQAI (130 aa). Residues 930-1059 form an allosteric domain region; sequence FHLPAFGNVI…ESRGFITQAI (130 aa).

This sequence belongs to the CarB family. Composed of two chains; the small (or glutamine) chain promotes the hydrolysis of glutamine to ammonia, which is used by the large (or ammonia) chain to synthesize carbamoyl phosphate. Tetramer of heterodimers (alpha,beta)4. It depends on Mg(2+) as a cofactor. Mn(2+) is required as a cofactor.

The enzyme catalyses hydrogencarbonate + L-glutamine + 2 ATP + H2O = carbamoyl phosphate + L-glutamate + 2 ADP + phosphate + 2 H(+). It catalyses the reaction hydrogencarbonate + NH4(+) + 2 ATP = carbamoyl phosphate + 2 ADP + phosphate + 2 H(+). It participates in amino-acid biosynthesis; L-arginine biosynthesis; carbamoyl phosphate from bicarbonate: step 1/1. It functions in the pathway pyrimidine metabolism; UMP biosynthesis via de novo pathway; (S)-dihydroorotate from bicarbonate: step 1/3. In terms of biological role, large subunit of the glutamine-dependent carbamoyl phosphate synthetase (CPSase). CPSase catalyzes the formation of carbamoyl phosphate from the ammonia moiety of glutamine, carbonate, and phosphate donated by ATP, constituting the first step of 2 biosynthetic pathways, one leading to arginine and/or urea and the other to pyrimidine nucleotides. The large subunit (synthetase) binds the substrates ammonia (free or transferred from glutamine from the small subunit), hydrogencarbonate and ATP and carries out an ATP-coupled ligase reaction, activating hydrogencarbonate by forming carboxy phosphate which reacts with ammonia to form carbamoyl phosphate. The sequence is that of Carbamoyl phosphate synthase large chain from Streptococcus mutans serotype c (strain ATCC 700610 / UA159).